A 357-amino-acid chain; its full sequence is Low-salt glycan biosynthesis nucleotidyltransferase Agl11 (357 aa).

Residues Asp108 and Asp221 each contribute to the Mg(2+) site.

The protein belongs to the glucose-1-phosphate thymidylyltransferase family. It depends on Mg(2+) as a cofactor.

It participates in protein modification; protein glycosylation. Its pathway is cell surface structure biogenesis; S-layer biogenesis. Functionally, nucleotidyltransferase involved in N-glycan biosynthetic pathway that takes place under low-salt conditions (1.75 M instead of 3.4 M). Participates in the formation of the tetrasaccharide present at 'Asn-532' of S-layer glycoprotein Csg, consisting of a sulfated hexose, 2 hexoses and rhamnose. Involved in the addition of final rhamnose (sugar 4) of the tetrasaccharide on the dolichol phosphate carrier. This Haloferax volcanii (strain ATCC 29605 / DSM 3757 / JCM 8879 / NBRC 14742 / NCIMB 2012 / VKM B-1768 / DS2) (Halobacterium volcanii) protein is Low-salt glycan biosynthesis nucleotidyltransferase Agl11 (agl11).